The primary structure comprises 321 residues: Malate dehydrogenase (321 aa).

Residues 10-15 (GSGMIG) and D34 contribute to the NAD(+) site. The substrate site is built by R83 and R89. NAD(+) contacts are provided by residues N96 and 119–121 (ITN). Substrate contacts are provided by N121 and R152. H176 (proton acceptor) is an active-site residue.

Belongs to the LDH/MDH superfamily. MDH type 3 family.

The catalysed reaction is (S)-malate + NAD(+) = oxaloacetate + NADH + H(+). Functionally, catalyzes the reversible oxidation of malate to oxaloacetate. This is Malate dehydrogenase from Chelativorans sp. (strain BNC1).